A 115-amino-acid chain; its full sequence is UPF0102 protein Kole_1919 (115 aa).

This sequence belongs to the UPF0102 family.

In Kosmotoga olearia (strain ATCC BAA-1733 / DSM 21960 / TBF 19.5.1), this protein is UPF0102 protein Kole_1919.